Here is a 114-residue protein sequence, read N- to C-terminus: Class I hydrophobin SC16 (114 aa).

The N-terminal stretch at 1–17 is a signal peptide; the sequence is MRFFATLVLALPALAMA. 4 disulfide bridges follow: Cys33/Cys93, Cys40/Cys87, Cys41/Cys74, and Cys94/Cys107. The N-linked (GlcNAc...) asparagine glycan is linked to Asn42.

Belongs to the fungal hydrophobin family. As to quaternary structure, self-assembles to form functional amyloid fibrils called rodlets. Self-assembly into fibrillar rodlets occurs spontaneously at hydrophobic:hydrophilic interfaces and the rodlets further associate laterally to form amphipathic monolayers.

It is found in the secreted. It localises to the cell wall. Its function is as follows. Aerial growth, conidiation, and dispersal of filamentous fungi in the environment rely upon a capability of their secreting small amphipathic proteins called hydrophobins (HPBs) with low sequence identity. Class I can self-assemble into an outermost layer of rodlet bundles on aerial cell surfaces, conferring cellular hydrophobicity that supports fungal growth, development and dispersal; whereas Class II form highly ordered films at water-air interfaces through intermolecular interactions but contribute nothing to the rodlet structure. This is Class I hydrophobin SC16 from Schizophyllum commune (strain H4-8 / FGSC 9210) (Split gill fungus).